Here is a 144-residue protein sequence, read N- to C-terminus: 3-hydroxyacyl-[acyl-carrier-protein] dehydratase FabZ (144 aa).

Histidine 52 is a catalytic residue.

Belongs to the thioester dehydratase family. FabZ subfamily.

The protein localises to the cytoplasm. It catalyses the reaction a (3R)-hydroxyacyl-[ACP] = a (2E)-enoyl-[ACP] + H2O. Functionally, involved in unsaturated fatty acids biosynthesis. Catalyzes the dehydration of short chain beta-hydroxyacyl-ACPs and long chain saturated and unsaturated beta-hydroxyacyl-ACPs. The chain is 3-hydroxyacyl-[acyl-carrier-protein] dehydratase FabZ from Syntrophomonas wolfei subsp. wolfei (strain DSM 2245B / Goettingen).